The following is a 24-amino-acid chain: 29 kDa outer membrane protein (24 aa).

Its subcellular location is the cell outer membrane. Functionally, may be involved in transporting molecules across the outer membrane. The chain is 29 kDa outer membrane protein from Acinetobacter baumannii.